A 611-amino-acid polypeptide reads, in one-letter code: Dihydroxy-acid dehydratase (611 aa).

D81 serves as a coordination point for Mg(2+). C122 is a binding site for [2Fe-2S] cluster. Residues D123 and K124 each contribute to the Mg(2+) site. An N6-carboxylysine modification is found at K124. Position 195 (C195) interacts with [2Fe-2S] cluster. Residue E491 coordinates Mg(2+). Residue S517 is the Proton acceptor of the active site.

Belongs to the IlvD/Edd family. In terms of assembly, homodimer. [2Fe-2S] cluster serves as cofactor. Mg(2+) is required as a cofactor.

It catalyses the reaction (2R)-2,3-dihydroxy-3-methylbutanoate = 3-methyl-2-oxobutanoate + H2O. The enzyme catalyses (2R,3R)-2,3-dihydroxy-3-methylpentanoate = (S)-3-methyl-2-oxopentanoate + H2O. The protein operates within amino-acid biosynthesis; L-isoleucine biosynthesis; L-isoleucine from 2-oxobutanoate: step 3/4. It participates in amino-acid biosynthesis; L-valine biosynthesis; L-valine from pyruvate: step 3/4. Its function is as follows. Functions in the biosynthesis of branched-chain amino acids. Catalyzes the dehydration of (2R,3R)-2,3-dihydroxy-3-methylpentanoate (2,3-dihydroxy-3-methylvalerate) into 2-oxo-3-methylpentanoate (2-oxo-3-methylvalerate) and of (2R)-2,3-dihydroxy-3-methylbutanoate (2,3-dihydroxyisovalerate) into 2-oxo-3-methylbutanoate (2-oxoisovalerate), the penultimate precursor to L-isoleucine and L-valine, respectively. This chain is Dihydroxy-acid dehydratase, found in Glaesserella parasuis serovar 5 (strain SH0165) (Haemophilus parasuis).